Consider the following 773-residue polypeptide: Transducin-like enhancer protein 4 (773 aa).

Disordered regions lie at residues 1–22, 140–162, and 182–360; these read MIRDLSKMYPQTRHPAPHQPAQ, HGHGLPVPLTPHPSGLQPPAIPP, and LPIK…ASSL. Positions 1-136 are q domain; the sequence is MIRDLSKMYP…AIIGQQLQAQ (136 aa). Residues 137 to 204 form a GP domain region; sequence HLSHGHGLPV…HQRDRDSIKS (68 aa). The span at 183-202 shows a compositional bias: basic and acidic residues; that stretch reads PIKDEKKHHDNDHQRDRDSI. Residues 203-212 are compositionally biased toward low complexity; the sequence is KSSSVSPSAS. The segment at 205–274 is ccN domain; it reads SSVSPSASFR…SPRGSPAHSP (70 aa). Ser-208, Ser-212, and Ser-222 each carry phosphoserine. The segment covering 215 to 252 has biased composition (basic and acidic residues); it reads GAEKHRNSADYSSESKKQKTEEKEIAARYDSDGEKSDD. Lys-237 bears the N6-acetyllysine mark. 4 positions are modified to phosphoserine: Ser-245, Ser-250, Ser-269, and Ser-273. The segment covering 273–289 has biased composition (basic and acidic residues); that stretch reads SPRENGLDKTRLLKKDA. An SP domain region spans residues 275 to 452; the sequence is RENGLDKTRL…PGGKPAYSFH (178 aa). Lys-281 bears the N6-acetyllysine mark. The segment covering 290 to 305 has biased composition (low complexity); the sequence is PISPASIASSSSTPSS. Phosphoserine is present on Ser-292. Over residues 317–328 the composition is skewed to polar residues; it reads TTPVSKSNTPTP. A Phosphothreonine modification is found at Thr-318. Phosphoserine is present on residues Ser-321 and Ser-323. Phosphothreonine is present on residues Thr-325, Thr-327, Thr-334, and Thr-340. Ser-419 bears the Phosphoserine mark. 7 WD repeats span residues 485–523, 531–570, 575–614, 617–656, 658–697, 699–738, and 740–773; these read NHGEVVCAVTISNPTRHVYTGGKGCVKVWDISHPGNKSP, NRDNYIRSCRLLPDGRTLIVGGEASTLSIWDLAAPTPRIK, SSAPACYALAISPDSKVCFSCCSDGNIAVWDLHNQTLVRQ, GHTDGASCIDISNDGTKLWTGGLDNTVRSWDLREGRQLQQ, DFTSQIFSLGYCPTGEWLAVGMENSNVEVLHVTKPDKYQL, LHESCVLSLKFAHCGKWFVSTGKDNLLNAWRTPYGASIFQ, and KESSSVLSCDISVDDKYIVTGSGDKKATVYEVIY.

Belongs to the WD repeat Groucho/TLE family. In terms of assembly, homooligomer and heterooligomer with other family members. Interacts with PAX5. Interacts with LEF1, TCF7, TCF7L1 and TCF7L2. Interacts with ZNF703; TLE4 may mediate ZNF703 transcriptional repression. Interacts with SIX3 and SIX6. Interacts with PAX2. Interacts with TLE1. Phosphorylated. PAX5 binding increases phosphorylation. Post-translationally, ubiquitinated by XIAP/BIRC4. As to expression, in all tissues examined, mostly in brain, and muscle.

Its subcellular location is the nucleus. Its function is as follows. Transcriptional corepressor that binds to a number of transcription factors. Inhibits the transcriptional activation mediated by PAX5, and by CTNNB1 and TCF family members in Wnt signaling. The effects of full-length TLE family members may be modulated by association with dominant-negative AES. Essential for the transcriptional repressor activity of SIX3 during retina and lens development and for SIX3 transcriptional auto-repression. Involved in transcriptional repression of GNRHR and enhances MSX1-mediated transcriptional repression of CGA/alpha-GSU. This Homo sapiens (Human) protein is Transducin-like enhancer protein 4 (TLE4).